The primary structure comprises 344 residues: MHNKNNTILNMIKGESVSHTPVWFMRQAGRSQPEYRRLKEKYSLFEITHQAELCAYVTHLPVDNYNTDAAVLYKDIMTPLQPIGVDVEIKSGIGPVIHNPIKTIQDVEKLGHIDPKRDVPYVLDTIKLLTEEKLNVPLIGFTGAPFTLASYMIEGGPSKNYNFTKAMMYSDEATWFALMDHLVEMSITYTSAQIEAGAQIIQVFDSWVGALNVQDYRYYIKPAMNKLISGIKEKYNVPVILFGVGASHLADEWNTLPIDVLGLDWRLSIKEASSMNIDKTLQGNLDPSLLLAPWDVIEERLKAILDQGIAHGKHIFNLGHGVFPEVKPETLKRVTTFVHDYTQR.

Residues 26-30, F45, D75, Y151, S206, and H320 each bind substrate; that span reads RQAGR.

The protein belongs to the uroporphyrinogen decarboxylase family. As to quaternary structure, homodimer.

It localises to the cytoplasm. The catalysed reaction is uroporphyrinogen III + 4 H(+) = coproporphyrinogen III + 4 CO2. It functions in the pathway porphyrin-containing compound metabolism; protoporphyrin-IX biosynthesis; coproporphyrinogen-III from 5-aminolevulinate: step 4/4. Its function is as follows. Catalyzes the decarboxylation of four acetate groups of uroporphyrinogen-III to yield coproporphyrinogen-III. The sequence is that of Uroporphyrinogen decarboxylase from Staphylococcus saprophyticus subsp. saprophyticus (strain ATCC 15305 / DSM 20229 / NCIMB 8711 / NCTC 7292 / S-41).